We begin with the raw amino-acid sequence, 145 residues long: Basic phospholipase A2 textilotoxin A chain (145 aa).

An N-terminal signal peptide occupies residues 1–19; the sequence is MHPAHLLVLLGVCVSLLGA. Residues 20 to 27 constitute a propeptide that is removed on maturation; that stretch reads SDIPPLPL. 7 disulfides stabilise this stretch: Cys-38–Cys-98, Cys-54–Cys-144, Cys-56–Cys-72, Cys-71–Cys-125, Cys-78–Cys-118, Cys-87–Cys-111, and Cys-105–Cys-116. Residues Tyr-55, Gly-57, and Gly-59 each coordinate Ca(2+). Residue His-75 is part of the active site. Asp-76 lines the Ca(2+) pocket. Asp-119 is a catalytic residue.

Belongs to the phospholipase A2 family. Group I subfamily. D49 sub-subfamily. As to quaternary structure, heterohexamer. 2 forms exist: 2 A or 2 B chains, 2 C chains and 2 covalently-linked D chains, and 1 A or 1 B, 1 C, 2 covalently-linked D chains and 2 differentially glycosylated covalently-linked D chains. Textilotoxin was originally described as pentameric. It depends on Ca(2+) as a cofactor. As to expression, expressed by the venom gland.

The protein resides in the secreted. It carries out the reaction a 1,2-diacyl-sn-glycero-3-phosphocholine + H2O = a 1-acyl-sn-glycero-3-phosphocholine + a fatty acid + H(+). Its function is as follows. Snake venom oligomeric phospholipase A2 that has potent presynaptic neurotoxicity. Chain A possesses a very low toxicity, but is essential for neurotoxicity. Possesses a low enzymatic activity. PLA2 catalyzes the calcium-dependent hydrolysis of the 2-acyl groups in 3-sn-phosphoglycerides. This is Basic phospholipase A2 textilotoxin A chain from Pseudonaja textilis (Eastern brown snake).